The primary structure comprises 75 residues: UPF0291 protein Teth39_0326 (75 aa).

The protein belongs to the UPF0291 family.

It localises to the cytoplasm. This chain is UPF0291 protein Teth39_0326, found in Thermoanaerobacter pseudethanolicus (strain ATCC 33223 / 39E) (Clostridium thermohydrosulfuricum).